The sequence spans 264 residues: Thiazole synthase (264 aa).

Catalysis depends on K106, which acts as the Schiff-base intermediate with DXP. Residues G167, 193–194, and 215–216 each bind 1-deoxy-D-xylulose 5-phosphate; these read AG and NS.

The protein belongs to the ThiG family. As to quaternary structure, homotetramer. Forms heterodimers with either ThiH or ThiS.

The protein resides in the cytoplasm. It carries out the reaction [ThiS sulfur-carrier protein]-C-terminal-Gly-aminoethanethioate + 2-iminoacetate + 1-deoxy-D-xylulose 5-phosphate = [ThiS sulfur-carrier protein]-C-terminal Gly-Gly + 2-[(2R,5Z)-2-carboxy-4-methylthiazol-5(2H)-ylidene]ethyl phosphate + 2 H2O + H(+). It functions in the pathway cofactor biosynthesis; thiamine diphosphate biosynthesis. Catalyzes the rearrangement of 1-deoxy-D-xylulose 5-phosphate (DXP) to produce the thiazole phosphate moiety of thiamine. Sulfur is provided by the thiocarboxylate moiety of the carrier protein ThiS. In vitro, sulfur can be provided by H(2)S. The polypeptide is Thiazole synthase (Pseudomonas fluorescens (strain SBW25)).